The following is a 1270-amino-acid chain: Breakpoint cluster region protein (1270 aa).

Residue M1 is modified to N-acetylmethionine. Residues 1–428 (MVDSVGFAEA…DGDSTFQGEA (428 aa)) form a kinase region. Residues 28–55 (VGDIEQELERCKASIRRLEQEVNQERFR) are a coiled coil. Residues 67–173 (KKSYDRQRWG…GPAQPGSADA (107 aa)) form a disordered region. Over residues 121 to 139 (GSPSKGRSASARRPAAAAS) the composition is skewed to low complexity. 2 positions are modified to phosphoserine: S122 and S139. Position 178 is a phosphotyrosine; by HCK (Y178). Residues 198–387 (SDRISSLGSQ…QSFDSSSPPT (190 aa)) are binding to ABL SH2-domain. Disordered stretches follow at residues 201 to 249 (ISSL…DYED), 295 to 396 (KSPL…RHRQ), and 412 to 481 (TGQI…SGAL). Residues S203, S216, and S237 each carry the phosphoserine modification. Position 247 is a phosphotyrosine; by FES (Y247). Composition is skewed to low complexity over residues 348-358 (SSGQSSRVSPS) and 371-384 (SPSQ…DSSS). Phosphoserine occurs at positions 358, 379, and 384. Position 387 is a phosphothreonine (T387). Phosphoserine is present on residues S461 and S465. R473 bears the Omega-N-methylarginine mark. Phosphoserine occurs at positions 475 and 487. Positions 497–690 (MRKWVLSGIL…QNFLSSINEE (194 aa)) constitute a DH domain. At Y553 the chain carries Phosphotyrosine. T640 is modified (phosphothreonine). Phosphotyrosine is present on Y643. The residue at position 692 (T692) is a Phosphothreonine. One can recognise a PH domain in the interval 707–865 (QLLKDSFMVE…WRESIREQQK (159 aa)). One can recognise a C2 domain in the interval 892-1019 (HHIPLTINKE…QDRDWQRTVI (128 aa)). The 195-residue stretch at 1053–1247 (VKIAVVTKRE…VMSQVQVLLY (195 aa)) folds into the Rho-GAP domain. S1263 is modified (phosphoserine).

Homotetramer. Interacts with PDZK1. Interacts with HCK, FES/FPS, ABL1, PIK3R1 and GRB2. May interact with CCPG1. Interacts with SH2D5. Interacts with DLG4. Autophosphorylated. Phosphorylated by FES/FPS on tyrosine residues, leading to down-regulation of the BCR kinase activity. Phosphorylation at Tyr-178 by HCK is important for interaction with GRB2. As to expression, expressed in brain. In hippocampal subregions, most abundant in the CA1 region and expressed at successively lower levels in the dentate gyrus and the CA3 region.

Its subcellular location is the postsynaptic density. The protein localises to the cell projection. It is found in the dendritic spine. The protein resides in the axon. It localises to the synapse. The catalysed reaction is L-seryl-[protein] + ATP = O-phospho-L-seryl-[protein] + ADP + H(+). It carries out the reaction L-threonyl-[protein] + ATP = O-phospho-L-threonyl-[protein] + ADP + H(+). Protein with a unique structure having two opposing regulatory activities toward small GTP-binding proteins. The C-terminus is a GTPase-activating protein (GAP) domain which stimulates GTP hydrolysis by RAC1, RAC2 and CDC42. Accelerates the intrinsic rate of GTP hydrolysis of RAC1 or CDC42, leading to down-regulation of the active GTP-bound form. The central Dbl homology (DH) domain functions as guanine nucleotide exchange factor (GEF) that modulates the GTPases CDC42, RHOA and RAC1. Promotes the conversion of CDC42, RHOA and RAC1 from the GDP-bound to the GTP-bound form. The amino terminus contains an intrinsic kinase activity. Functions as an important negative regulator of neuronal RAC1 activity. Regulates macrophage functions such as CSF1-directed motility and phagocytosis through the modulation of RAC1 activity. Plays a major role as a RHOA GEF in keratinocytes being involved in focal adhesion formation and keratinocyte differentiation. The protein is Breakpoint cluster region protein of Mus musculus (Mouse).